Here is a 446-residue protein sequence, read N- to C-terminus: Tubulin beta chain (446 aa).

GTP-binding residues include glutamine 11, glutamate 69, serine 138, glycine 142, threonine 143, glycine 144, asparagine 204, and asparagine 226. Glutamate 69 lines the Mg(2+) pocket. The segment at 426 to 446 (QDATAEEEGEYVEDEDEMDGM) is disordered. Acidic residues predominate over residues 429-446 (TAEEEGEYVEDEDEMDGM).

It belongs to the tubulin family. In terms of assembly, dimer of alpha and beta chains. A typical microtubule is a hollow water-filled tube with an outer diameter of 25 nm and an inner diameter of 15 nM. Alpha-beta heterodimers associate head-to-tail to form protofilaments running lengthwise along the microtubule wall with the beta-tubulin subunit facing the microtubule plus end conferring a structural polarity. Microtubules usually have 13 protofilaments but different protofilament numbers can be found in some organisms and specialized cells. Mg(2+) serves as cofactor.

The protein resides in the cytoplasm. It localises to the cytoskeleton. Its function is as follows. Tubulin is the major constituent of microtubules, a cylinder consisting of laterally associated linear protofilaments composed of alpha- and beta-tubulin heterodimers. Microtubules grow by the addition of GTP-tubulin dimers to the microtubule end, where a stabilizing cap forms. Below the cap, tubulin dimers are in GDP-bound state, owing to GTPase activity of alpha-tubulin. This chain is Tubulin beta chain, found in Euplotes crassus.